Here is a 248-residue protein sequence, read N- to C-terminus: Isoprenyl transferase (248 aa).

Residue D23 is part of the active site. A Mg(2+)-binding site is contributed by D23. Residues 24-27 (GNGR), W28, R36, H40, and 68-70 (STE) contribute to the substrate site. N71 acts as the Proton acceptor in catalysis. Substrate-binding positions include W72, R74, R185, and 191 to 193 (RIS). Residue E204 participates in Mg(2+) binding.

It belongs to the UPP synthase family. Homodimer. Requires Mg(2+) as cofactor.

Functionally, catalyzes the condensation of isopentenyl diphosphate (IPP) with allylic pyrophosphates generating different type of terpenoids. The chain is Isoprenyl transferase from Neisseria gonorrhoeae (strain ATCC 700825 / FA 1090).